The sequence spans 511 residues: Trafficking protein particle complex subunit 13 homolog (511 aa).

Belongs to the TRAPPC13 family.

The protein is Trafficking protein particle complex subunit 13 homolog of Dictyostelium discoideum (Social amoeba).